We begin with the raw amino-acid sequence, 398 residues long: Nematocin receptor 2 (398 aa).

Residues 1-25 (MNNNTLNITNQRTAAAMSQIYFLVV) are Extracellular-facing. 2 N-linked (GlcNAc...) asparagine glycosylation sites follow: asparagine 3 and asparagine 7. A helical membrane pass occupies residues 26–46 (YQTAVMIVSLLGNLFLLFVIF). The Cytoplasmic portion of the chain corresponds to 47 to 58 (RANQVMKRRVSP). A helical membrane pass occupies residues 59-79 (VQLLIIHTCVADLLFALLSLG). At 80-99 (TEILTLRTYPQYYGSNFVCK) the chain is on the extracellular side. Cysteine 98 and cysteine 173 form a disulfide bridge. A helical transmembrane segment spans residues 100 to 120 (LMRYVQMFPMYASPFLLVAIS). Topologically, residues 121 to 143 (ADRYQAICRPLAHFRSSRYRRPN) are cytoplasmic. Residues 144-164 (WMAAIAWGLALVLSIPQFFVW) traverse the membrane as a helical segment. Over 165 to 187 (TKHSKTGRCSTIYGQNKNTVKIT) the chain is Extracellular. The helical transmembrane segment at 188-208 (YVIMFNTLAWLLPSILAAVFY) threads the bilayer. At 209-271 (YCVCKAVRLS…DRKRVQTVRL (63 aa)) the chain is on the cytoplasmic side. Residues 272–292 (TITIVACNFFLWMPFCLINVI) traverse the membrane as a helical segment. The Extracellular portion of the chain corresponds to 293 to 302 (QALWPEISHI). Residues 303 to 325 (MFINYVAILGNLNSCLNPWIYIL) form a helical membrane-spanning segment. Residues 326–398 (FNRSHVRKAL…DSTSLKTNSN (73 aa)) lie on the Cytoplasmic side of the membrane.

The protein belongs to the G-protein coupled receptor 1 family. Vasopressin/oxytocin receptor subfamily. Detected in the ADL sensory neurons, the RMED and RMEV motor neurons, and the PQR tail neuron. In males, detected in SPC tail neurons involved in spicule penetration and sperm transfer, and male-specific oblique muscles involved in vulval contact.

The protein resides in the cell membrane. Not directly activated by nematocin. May modulate activity of the nematocin receptor ntr-1, leading to reduced intracellular cAMP production. Plays a role in male mating behavior. The protein is Nematocin receptor 2 of Caenorhabditis elegans.